The chain runs to 457 residues: Putative zinc finger CCCH domain-containing protein 21 (457 aa).

Disordered regions lie at residues 51-73 (PTSS…ARAS), 102-130 (LESP…EKLL), 195-221 (TSPS…ERER), and 280-329 (RKQA…RLRV). Residues 57-66 (DGGGGGGGGY) show a composition bias toward gly residues. The stretch at 215-276 (ASAEREREVR…HLSLLLEELE (62 aa)) forms a coiled coil. 2 consecutive C3H1-type zinc fingers follow at residues 382-409 (AAKT…HGLQ) and 419-447 (RYKT…HSPL).

This chain is Putative zinc finger CCCH domain-containing protein 21, found in Oryza sativa subsp. japonica (Rice).